We begin with the raw amino-acid sequence, 176 residues long: Macro domain-containing protein mll7730 (176 aa).

The Macro domain maps to 1 to 174 (MSKALDRIRI…LYLRAVAALR (174 aa)).

The protein belongs to the MacroD-type family.

The sequence is that of Macro domain-containing protein mll7730 from Mesorhizobium japonicum (strain LMG 29417 / CECT 9101 / MAFF 303099) (Mesorhizobium loti (strain MAFF 303099)).